We begin with the raw amino-acid sequence, 385 residues long: DNA replication and repair protein RecF (385 aa).

Residue 30–37 (GPNGNGKT) coordinates ATP.

This sequence belongs to the RecF family.

The protein localises to the cytoplasm. Functionally, the RecF protein is involved in DNA metabolism; it is required for DNA replication and normal SOS inducibility. RecF binds preferentially to single-stranded, linear DNA. It also seems to bind ATP. This is DNA replication and repair protein RecF from Mycobacterium leprae (strain Br4923).